The sequence spans 807 residues: Leucine--tRNA ligase (807 aa).

Residues P40 to H51 carry the 'HIGH' region motif. A 'KMSKS' region motif is present at residues K576–S580. An ATP-binding site is contributed by K579.

Belongs to the class-I aminoacyl-tRNA synthetase family.

Its subcellular location is the cytoplasm. It catalyses the reaction tRNA(Leu) + L-leucine + ATP = L-leucyl-tRNA(Leu) + AMP + diphosphate. In Chlorobaculum parvum (strain DSM 263 / NCIMB 8327) (Chlorobium vibrioforme subsp. thiosulfatophilum), this protein is Leucine--tRNA ligase.